A 163-amino-acid polypeptide reads, in one-letter code: Inner membrane protein YcdZ (163 aa).

At 1–2 (MN) the chain is on the cytoplasmic side. A helical membrane pass occupies residues 3–23 (ILLSIAITTGILSGIWGWVAV). Residue serine 24 is a topological domain, periplasmic. The chain crosses the membrane as a helical span at residues 25-45 (LGLLSWAGFLGCTAYFACPQG). The Cytoplasmic segment spans residues 46–48 (GLK). A helical transmembrane segment spans residues 49-69 (GLAISAATLLSGVVWAMVIIY). The Periplasmic portion of the chain corresponds to 70–71 (GS). The helical transmembrane segment at 72-92 (ALAPHLEILGYVITGIVAFLM) threads the bilayer. The Cytoplasmic portion of the chain corresponds to 93–98 (CIQAKQ). Residues 99-119 (LLLSFVPGTFIGACATFAGQG) traverse the membrane as a helical segment. Over 120 to 122 (DWK) the chain is Periplasmic. A helical transmembrane segment spans residues 123-143 (LVLPSLALGLIFGYAMKNSGL). Topologically, residues 144 to 163 (WLAARSAKTAHREQEIKNKA) are cytoplasmic.

This sequence to E.coli YahC.

Its subcellular location is the cell inner membrane. The sequence is that of Inner membrane protein YcdZ (ycdZ) from Escherichia coli (strain K12).